Consider the following 412-residue polypeptide: MKIYLVGGAIRDALLGLPVKDRDWVVVGSTPQEMLDAGYQQVGRDFPVFLHPQTHEEYALARTERKSGSGYTDFTCYAAPDVTLEDDLKRRDLTINALAQDDNGEIIDPYNGLGDLQNRLLRHVSPAFGEDPLRVLRVARFAARYAHLGFRIADETLTLMREMTHAGELEHLTPERVWKETESALTTRNPQVFFQVLRDCGALRVLFPEIDALFGVPAPARWHPEIDTGIHTLMTLSMAAMLSPQVDVRFATLCHDLGKGLTPPELWPRHHGHGPAGVKLVEQLCQRLRVPNEIRDLARLVAEFHDLIHTFPMLNPKTIVKLFDSIDAWRKPQRVEQLALTSEADVRGRTGFESADYPQGRWLREAWEVAQSVPTKAVVEAGFKGVEIREELTRRRIAAVASWKEQRCPKPD.

ATP is bound by residues G8 and R11. CTP-binding residues include G8 and R11. The Mg(2+) site is built by D21 and D23. ATP is bound by residues R91, R137, and R140. Residues R91, R137, and R140 each contribute to the CTP site. The HD domain occupies 228 to 329 (TGIHTLMTLS…VKLFDSIDAW (102 aa)).

The protein belongs to the tRNA nucleotidyltransferase/poly(A) polymerase family. Bacterial CCA-adding enzyme type 1 subfamily. Monomer. Can also form homodimers and oligomers. The cofactor is Mg(2+). Ni(2+) serves as cofactor.

The catalysed reaction is a tRNA precursor + 2 CTP + ATP = a tRNA with a 3' CCA end + 3 diphosphate. The enzyme catalyses a tRNA with a 3' CCA end + 2 CTP + ATP = a tRNA with a 3' CCACCA end + 3 diphosphate. Catalyzes the addition and repair of the essential 3'-terminal CCA sequence in tRNAs without using a nucleic acid template. Adds these three nucleotides in the order of C, C, and A to the tRNA nucleotide-73, using CTP and ATP as substrates and producing inorganic pyrophosphate. tRNA 3'-terminal CCA addition is required both for tRNA processing and repair. Also involved in tRNA surveillance by mediating tandem CCA addition to generate a CCACCA at the 3' terminus of unstable tRNAs. While stable tRNAs receive only 3'-terminal CCA, unstable tRNAs are marked with CCACCA and rapidly degraded. This is Multifunctional CCA protein from Shigella sonnei (strain Ss046).